Consider the following 181-residue polypeptide: Adenine phosphoribosyltransferase (181 aa).

This sequence belongs to the purine/pyrimidine phosphoribosyltransferase family. As to quaternary structure, homodimer.

It localises to the cytoplasm. The enzyme catalyses AMP + diphosphate = 5-phospho-alpha-D-ribose 1-diphosphate + adenine. It functions in the pathway purine metabolism; AMP biosynthesis via salvage pathway; AMP from adenine: step 1/1. Its function is as follows. Catalyzes a salvage reaction resulting in the formation of AMP, that is energically less costly than de novo synthesis. The polypeptide is Adenine phosphoribosyltransferase (Brucella anthropi (strain ATCC 49188 / DSM 6882 / CCUG 24695 / JCM 21032 / LMG 3331 / NBRC 15819 / NCTC 12168 / Alc 37) (Ochrobactrum anthropi)).